The chain runs to 417 residues: UDP-N-acetylglucosamine 1-carboxyvinyltransferase (417 aa).

22 to 23 (KN) provides a ligand contact to phosphoenolpyruvate. Position 92 (R92) interacts with UDP-N-acetyl-alpha-D-glucosamine. The active-site Proton donor is the C116. C116 bears the 2-(S-cysteinyl)pyruvic acid O-phosphothioketal mark. D304 and I326 together coordinate UDP-N-acetyl-alpha-D-glucosamine.

This sequence belongs to the EPSP synthase family. MurA subfamily.

It is found in the cytoplasm. It catalyses the reaction phosphoenolpyruvate + UDP-N-acetyl-alpha-D-glucosamine = UDP-N-acetyl-3-O-(1-carboxyvinyl)-alpha-D-glucosamine + phosphate. The protein operates within cell wall biogenesis; peptidoglycan biosynthesis. Functionally, cell wall formation. Adds enolpyruvyl to UDP-N-acetylglucosamine. The protein is UDP-N-acetylglucosamine 1-carboxyvinyltransferase of Geobacter sulfurreducens (strain ATCC 51573 / DSM 12127 / PCA).